Reading from the N-terminus, the 119-residue chain is Toxin ICK-11 (119 aa).

The signal sequence occupies residues 1-19 (MMKLYSLVIIATLAAAAFA). 4 cysteine pairs are disulfide-bonded: Cys-59–Cys-74, Cys-67–Cys-80, Cys-71–Cys-116, and Cys-73–Cys-87.

The protein belongs to the neurotoxin 25 family. ICK-8 subfamily. In terms of tissue distribution, expressed by the venom gland.

The protein resides in the secreted. Its function is as follows. Ion channel inhibitor. The sequence is that of Toxin ICK-11 from Trittame loki (Brush-footed trapdoor spider).